The following is a 358-amino-acid chain: MSAALEKPQIIAHIQKSLNYTVFESKWIPCSAKFVCMGNFARGTGVMQIYEIQHGELQLVREIEKSKPIKCGTFGATSLQQRHLATGDFDGNLNVWNLEVPDSPVYSVKAHKEIINAIDGVGGLGIGDGAPEIVTGSRDGTVKVWDSRQKDTPVVNMEPTEGETKRDCWTVAFGHAFNDQDRCVCAGYDNGDIKLFDLRNMSLRWEKNIRNGVCSVEFDRKDINMNKLVATSLEGKFHVFDMRTQHPSKGFASVSEKAHKSTIWQVRHLPQNRDVFMTAGGAGNLHLWKYEYPAQRSKKGADDVEMGVAGSVNLLQNVTLSTQPISSLDWSPDKQGLCVCSSFDQSVRVLIVTKLNTV.

WD repeat units follow at residues 64-106 (EKSK…SPVY), 116-155 (NAID…TPVV), 163-206 (ETKR…LRWE), 208-250 (NIRN…PSKG), 258-298 (AHKS…QRSK), and 320-358 (LSTQ…LNTV).

In terms of assembly, interacts with PIH1D1; the interaction associates DNAAF10 with the R2TP complex. Interacts with several dynein axonemal assembly factors.

The protein localises to the dynein axonemal particle. Its function is as follows. Key assembly factor specifically required for the stability of axonemal dynein heavy chains in cytoplasm. The polypeptide is Dynein axonemal assembly factor 10 (dnaaf10) (Danio rerio (Zebrafish)).